The following is a 349-amino-acid chain: Spermidine/putrescine import ATP-binding protein PotA (349 aa).

The ABC transporter domain maps to 7 to 237 (IELKGITKSY…PANSFVAKFI (231 aa)). Residue 39–46 (GPSGCGKT) coordinates ATP.

It belongs to the ABC transporter superfamily. Spermidine/putrescine importer (TC 3.A.1.11.1) family. In terms of assembly, the complex is composed of two ATP-binding proteins (PotA), two transmembrane proteins (PotB and PotC) and a solute-binding protein (PotD).

It is found in the cell membrane. The catalysed reaction is ATP + H2O + polyamine-[polyamine-binding protein]Side 1 = ADP + phosphate + polyamineSide 2 + [polyamine-binding protein]Side 1.. Its function is as follows. Part of the ABC transporter complex PotABCD involved in spermidine/putrescine import. Responsible for energy coupling to the transport system. The protein is Spermidine/putrescine import ATP-binding protein PotA of Clostridium perfringens (strain SM101 / Type A).